A 1079-amino-acid chain; its full sequence is Error-prone DNA polymerase (1079 aa).

The protein belongs to the DNA polymerase type-C family. DnaE2 subfamily.

The protein resides in the cytoplasm. It catalyses the reaction DNA(n) + a 2'-deoxyribonucleoside 5'-triphosphate = DNA(n+1) + diphosphate. Its function is as follows. DNA polymerase involved in damage-induced mutagenesis and translesion synthesis (TLS). It is not the major replicative DNA polymerase. The sequence is that of Error-prone DNA polymerase from Ralstonia pickettii (strain 12J).